The sequence spans 529 residues: Beta-galactoside alpha-2,6-sialyltransferase 2 (529 aa).

Topologically, residues 1 to 11 (MKPHLKQWRQR) are cytoplasmic. The chain crosses the membrane as a helical; Signal-anchor for type II membrane protein span at residues 12–32 (MLFGLFAGGLLFLLIFIYFTD). Over 33–529 (SNPAEPVPSS…PAPSPVIPHS (497 aa)) the chain is Lumenal. Residues 142–186 (SHSQGTLGFPSPGEPGPREGAFPAAQVQRRRVKKRHRRQRRSHVL) form a disordered region. Basic residues predominate over residues 169–183 (QRRRVKKRHRRQRRS). N-linked (GlcNAc...) asparagine glycosylation is present at asparagine 211. Cystine bridges form between cysteine 253–cysteine 519, cysteine 296–cysteine 448, and cysteine 466–cysteine 477.

This sequence belongs to the glycosyltransferase 29 family.

It is found in the golgi apparatus. Its subcellular location is the golgi stack membrane. The catalysed reaction is a beta-D-galactoside + CMP-N-acetyl-beta-neuraminate = an N-acetyl-alpha-neuraminyl-(2-&gt;6)-beta-D-galactosyl derivative + CMP + H(+). Functionally, transfers sialic acid from the donor of substrate CMP-sialic acid to galactose containing acceptor substrates. Has alpha-2,6-sialyltransferase activity toward oligosaccharides that have the Gal-beta-1,4-GlcNAc sequence at the non-reducing end of their carbohydrate groups, but it has weak or no activities toward glycoproteins and glycolipids. In Pan troglodytes (Chimpanzee), this protein is Beta-galactoside alpha-2,6-sialyltransferase 2 (ST6GAL2).